Reading from the N-terminus, the 2512-residue chain is Isonitrile lipopeptide synthase (2512 aa).

Carrier domains are found at residues 935–1003 and 1984–2059; these read AAGL…PTPD and APAG…GRDA. O-(pantetheine 4'-phosphoryl)serine occurs at positions 963 and 2019. The 261-residue stretch at 2112–2372 folds into the Thioester reductase (TE) domain; it reads LTGATGFLGR…LPVTFVAEAI (261 aa).

The protein belongs to the ATP-dependent AMP-binding enzyme family. Requires pantetheine 4'-phosphate as cofactor.

It catalyses the reaction 2 a (3R)-3-isocyanyl-fatty acyl-[ACP] + L-lysine + ATP + 2 NADPH = an isonitrile lipopeptide + 2 holo-[ACP] + AMP + diphosphate + 2 NADP(+). In terms of biological role, nonribosomal peptide synthetase (NRPS) involved in the biosynthesis of a unique class of isonitrile lipopeptides (INLPs) that seem to function as virulence factors in M.tuberculosis and to play a role in metal acquisition. Catalyzes the final step in the pathway, i.e. the condensation of a (3R)-3-isocyanyl-fatty acyl-[ACP] to both amino groups of a lysine, producing isonitrile lipopeptides. The protein is Isonitrile lipopeptide synthase of Mycobacterium tuberculosis (strain ATCC 25618 / H37Rv).